Reading from the N-terminus, the 359-residue chain is 3-dehydroquinate synthase (359 aa).

NAD(+)-binding positions include 69–74 (DGEKYK), 103–107 (GVVGD), 127–128 (TT), K140, K149, and 167–170 (TLDT). Zn(2+) is bound by residues E182, H245, and H262.

It belongs to the sugar phosphate cyclases superfamily. Dehydroquinate synthase family. Co(2+) serves as cofactor. The cofactor is Zn(2+). Requires NAD(+) as cofactor.

It localises to the cytoplasm. It catalyses the reaction 7-phospho-2-dehydro-3-deoxy-D-arabino-heptonate = 3-dehydroquinate + phosphate. It participates in metabolic intermediate biosynthesis; chorismate biosynthesis; chorismate from D-erythrose 4-phosphate and phosphoenolpyruvate: step 2/7. Functionally, catalyzes the conversion of 3-deoxy-D-arabino-heptulosonate 7-phosphate (DAHP) to dehydroquinate (DHQ). The chain is 3-dehydroquinate synthase from Ruthia magnifica subsp. Calyptogena magnifica.